Consider the following 55-residue polypeptide: ATP synthase protein 8 (55 aa).

The chain crosses the membrane as a helical span at residues 4-24; that stretch reads LNPNPWFTILIFTWAVFLTIL.

This sequence belongs to the ATPase protein 8 family. As to quaternary structure, F-type ATPases have 2 components, CF(1) - the catalytic core - and CF(0) - the membrane proton channel.

The protein resides in the mitochondrion membrane. Functionally, mitochondrial membrane ATP synthase (F(1)F(0) ATP synthase or Complex V) produces ATP from ADP in the presence of a proton gradient across the membrane which is generated by electron transport complexes of the respiratory chain. F-type ATPases consist of two structural domains, F(1) - containing the extramembraneous catalytic core and F(0) - containing the membrane proton channel, linked together by a central stalk and a peripheral stalk. During catalysis, ATP synthesis in the catalytic domain of F(1) is coupled via a rotary mechanism of the central stalk subunits to proton translocation. Part of the complex F(0) domain. Minor subunit located with subunit a in the membrane. This Polypterus ornatipinnis (Ornate bichir) protein is ATP synthase protein 8 (mt-atp8).